A 367-amino-acid chain; its full sequence is Cell division protein FtsZ (367 aa).

GTP contacts are provided by residues 17–21 (GGGSN), 104–106 (GTG), Glu135, Lys139, and Asp183.

This sequence belongs to the FtsZ family. As to quaternary structure, homodimer. Polymerizes to form a dynamic ring structure in a strictly GTP-dependent manner. Interacts directly with several other division proteins.

Its subcellular location is the cytoplasm. In terms of biological role, essential cell division protein that forms a contractile ring structure (Z ring) at the future cell division site. The regulation of the ring assembly controls the timing and the location of cell division. One of the functions of the FtsZ ring is to recruit other cell division proteins to the septum to produce a new cell wall between the dividing cells. Binds GTP and shows GTPase activity. The polypeptide is Cell division protein FtsZ (Aquifex aeolicus (strain VF5)).